We begin with the raw amino-acid sequence, 382 residues long: Queuine tRNA-ribosyltransferase (382 aa).

D96 serves as the catalytic Proton acceptor. Substrate-binding positions include 96 to 100, D151, Q194, and G221; that span reads DSGGF. The interval 252-258 is RNA binding; that stretch reads GVGAPDS. Catalysis depends on D271, which acts as the Nucleophile. Positions 276 to 280 are RNA binding; important for wobble base 34 recognition; sequence TRIAR. Positions 309, 311, 314, and 340 each coordinate Zn(2+).

It belongs to the queuine tRNA-ribosyltransferase family. As to quaternary structure, homodimer. Within each dimer, one monomer is responsible for RNA recognition and catalysis, while the other monomer binds to the replacement base PreQ1. The cofactor is Zn(2+).

It carries out the reaction 7-aminomethyl-7-carbaguanine + guanosine(34) in tRNA = 7-aminomethyl-7-carbaguanosine(34) in tRNA + guanine. Its pathway is tRNA modification; tRNA-queuosine biosynthesis. Its function is as follows. Catalyzes the base-exchange of a guanine (G) residue with the queuine precursor 7-aminomethyl-7-deazaguanine (PreQ1) at position 34 (anticodon wobble position) in tRNAs with GU(N) anticodons (tRNA-Asp, -Asn, -His and -Tyr). Catalysis occurs through a double-displacement mechanism. The nucleophile active site attacks the C1' of nucleotide 34 to detach the guanine base from the RNA, forming a covalent enzyme-RNA intermediate. The proton acceptor active site deprotonates the incoming PreQ1, allowing a nucleophilic attack on the C1' of the ribose to form the product. After dissociation, two additional enzymatic reactions on the tRNA convert PreQ1 to queuine (Q), resulting in the hypermodified nucleoside queuosine (7-(((4,5-cis-dihydroxy-2-cyclopenten-1-yl)amino)methyl)-7-deazaguanosine). The protein is Queuine tRNA-ribosyltransferase of Lactococcus lactis subsp. cremoris (strain SK11).